A 346-amino-acid polypeptide reads, in one-letter code: tRNA N6-adenosine threonylcarbamoyltransferase (346 aa).

Residues His-111 and His-115 each coordinate Fe cation. Residues 134-138, Asp-167, Gly-180, and Asn-277 each bind substrate; that span reads LVSGG. Asp-305 provides a ligand contact to Fe cation.

Belongs to the KAE1 / TsaD family. Fe(2+) is required as a cofactor.

It localises to the cytoplasm. It catalyses the reaction L-threonylcarbamoyladenylate + adenosine(37) in tRNA = N(6)-L-threonylcarbamoyladenosine(37) in tRNA + AMP + H(+). Required for the formation of a threonylcarbamoyl group on adenosine at position 37 (t(6)A37) in tRNAs that read codons beginning with adenine. Is involved in the transfer of the threonylcarbamoyl moiety of threonylcarbamoyl-AMP (TC-AMP) to the N6 group of A37, together with TsaE and TsaB. TsaD likely plays a direct catalytic role in this reaction. This Bordetella pertussis (strain Tohama I / ATCC BAA-589 / NCTC 13251) protein is tRNA N6-adenosine threonylcarbamoyltransferase.